A 216-amino-acid chain; its full sequence is UPF0323 lipoprotein HPAG1_0235 (216 aa).

A signal peptide spans 1-27; the sequence is MKKPYRKISDYAIVGGLSALVMVSIVG. Cysteine 28 is lipidated: N-palmitoyl cysteine. Cysteine 28 carries S-diacylglycerol cysteine lipidation. Residues 159–196 are compositionally biased toward polar residues; sequence QRTYKSPQAYQRSQNSFSKSAPSASGMGTASKGQSGFF. Residues 159-216 are disordered; the sequence is QRTYKSPQAYQRSQNSFSKSAPSASGMGTASKGQSGFFGSSRPTSSPAVSSGTRGFNA. Over residues 198–209 the composition is skewed to low complexity; that stretch reads SSRPTSSPAVSS.

The protein belongs to the UPF0323 family.

The protein resides in the cell membrane. This chain is UPF0323 lipoprotein HPAG1_0235, found in Helicobacter pylori (strain HPAG1).